The sequence spans 239 residues: Ribonuclease PH (239 aa).

Residues arginine 87 and 125 to 127 (GTR) contribute to the phosphate site.

Belongs to the RNase PH family. Homohexameric ring arranged as a trimer of dimers.

The catalysed reaction is tRNA(n+1) + phosphate = tRNA(n) + a ribonucleoside 5'-diphosphate. Functionally, phosphorolytic 3'-5' exoribonuclease that plays an important role in tRNA 3'-end maturation. Removes nucleotide residues following the 3'-CCA terminus of tRNAs; can also add nucleotides to the ends of RNA molecules by using nucleoside diphosphates as substrates, but this may not be physiologically important. Probably plays a role in initiation of 16S rRNA degradation (leading to ribosome degradation) during starvation. This is Ribonuclease PH from Ectopseudomonas mendocina (strain ymp) (Pseudomonas mendocina).